The chain runs to 357 residues: DNA replication and repair protein RecF (357 aa).

Residue 30 to 37 (GANGSGKT) coordinates ATP.

The protein belongs to the RecF family.

Its subcellular location is the cytoplasm. Functionally, the RecF protein is involved in DNA metabolism; it is required for DNA replication and normal SOS inducibility. RecF binds preferentially to single-stranded, linear DNA. It also seems to bind ATP. This Enterobacter sp. (strain 638) protein is DNA replication and repair protein RecF.